Here is a 186-residue protein sequence, read N- to C-terminus: Probable chorismate pyruvate-lyase (186 aa).

Substrate-binding residues include Arg77, Leu115, and Glu174.

The protein belongs to the UbiC family.

Its subcellular location is the cytoplasm. The catalysed reaction is chorismate = 4-hydroxybenzoate + pyruvate. Its pathway is cofactor biosynthesis; ubiquinone biosynthesis. In terms of biological role, removes the pyruvyl group from chorismate, with concomitant aromatization of the ring, to provide 4-hydroxybenzoate (4HB) for the ubiquinone pathway. This chain is Probable chorismate pyruvate-lyase, found in Shewanella sp. (strain W3-18-1).